We begin with the raw amino-acid sequence, 563 residues long: Benzaldehyde lyase (563 aa).

Belongs to the TPP enzyme family. A metal cation is required as a cofactor. The cofactor is thiamine diphosphate.

The enzyme catalyses benzoin = 2 benzaldehyde. In terms of biological role, cleavage of benzoin-anisoin acyloin linkage. The chain is Benzaldehyde lyase (bznB) from Pseudomonas fluorescens.